The sequence spans 186 residues: Translation initiation factor IF-3 (186 aa).

Belongs to the IF-3 family. Monomer.

It is found in the cytoplasm. Its function is as follows. IF-3 binds to the 30S ribosomal subunit and shifts the equilibrium between 70S ribosomes and their 50S and 30S subunits in favor of the free subunits, thus enhancing the availability of 30S subunits on which protein synthesis initiation begins. This is Translation initiation factor IF-3 from Chlamydia caviae (strain ATCC VR-813 / DSM 19441 / 03DC25 / GPIC) (Chlamydophila caviae).